The following is a 352-amino-acid chain: Ubiquitin thioesterase otulin (352 aa).

Residues 1–49 are disordered; that stretch reads MSRGTMPQPGAWPGASCAETPAREAGAAARDGGKVTAGAQPRAATRCPA. Over residues 18-30 the composition is skewed to low complexity; it reads AETPAREAGAAAR. The stretch at 49–73 forms a coiled coil; it reads AEHEEDMYRAADEIEKEKELLIHER. Positions 52-57 match the PIM motif motif; that stretch reads EEDMYR. Tyr56 carries the post-translational modification Phosphotyrosine. Linear diubiquitin binding regions lie at residues 95–96 and 124–126; these read EW and RGD. Residues 118 to 346 enclose the OTU domain; sequence TSIRRVRGDN…DRHYNIPVRV (229 aa). The active site involves Asp126. Residue Cys129 is the Nucleophile of the active site. Linear diubiquitin binding stretches follow at residues 255–259, 283–289, and 336–338; these read FFSVL, TGGLEQV, and DDR. The active site involves His339. Residues 349 to 352 carry the PDZ-binding motif; the sequence is ETSV.

It belongs to the peptidase C65 family. Otulin subfamily. As to quaternary structure, interacts (via the PUB domain) with RNF31 (via the PIM motif); the interaction is direct. Interacts with DVL2. In terms of processing, ubiquitinated. Acetylated. Post-translationally, phosphorylated. Phosphorylation at Tyr-56 prevents interaction with RNF31; dephosphorylation promotes interaction with RNF31 and the LUBAC complex.

It localises to the cytoplasm. The catalysed reaction is Thiol-dependent hydrolysis of ester, thioester, amide, peptide and isopeptide bonds formed by the C-terminal Gly of ubiquitin (a 76-residue protein attached to proteins as an intracellular targeting signal).. In terms of biological role, deubiquitinase that specifically removes linear ('Met-1'-linked) polyubiquitin chains to substrates and acts as a regulator of angiogenesis and innate immune response. Required during angiogenesis, craniofacial and neuronal development by regulating the canonical Wnt signaling together with the LUBAC complex. Acts as a negative regulator of NF-kappa-B by regulating the activity of the LUBAC complex. OTULIN function is mainly restricted to homeostasis of the LUBAC complex: acts by removing 'Met-1'-linked autoubiquitination of the LUBAC complex, thereby preventing inactivation of the LUBAC complex. Acts as a key negative regulator of inflammation by restricting spontaneous inflammation and maintaining immune homeostasis. In myeloid cell, required to prevent unwarranted secretion of cytokines leading to inflammation and autoimmunity by restricting linear polyubiquitin formation. Plays a role in innate immune response by restricting linear polyubiquitin formation on LUBAC complex in response to NOD2 stimulation, probably to limit NOD2-dependent pro-inflammatory signaling. In Mus musculus (Mouse), this protein is Ubiquitin thioesterase otulin.